Reading from the N-terminus, the 290-residue chain is Aquaporin-3 (290 aa).

At 1-24 (MGRQKELVTRCGEMLHIRYRLLRQ) the chain is on the cytoplasmic side. The chain crosses the membrane as a helical span at residues 25–42 (ALAECLGTLILVMFGCGS). Topologically, residues 43 to 56 (VAQVVLSRGTHGGF) are extracellular. Residues 57–74 (LTINLAFGFAVTLGILVA) form a helical membrane-spanning segment. Residues 75–78 (GQVS) are Cytoplasmic-facing. Residues 79 to 92 (GAHLNPAVTFAMCF) constitute an intramembrane region (discontinuously helical). Positions 83–85 (NPA) match the NPA 1 motif. The Cytoplasmic segment spans residues 93–100 (LAREPWIK). A helical membrane pass occupies residues 101–121 (LPVYTLAQTLGAFLGAGIIFG). The Extracellular portion of the chain corresponds to 122–159 (LYYDAIWAFANNQLIVSGPNGTAGIFATYPSGHLDMVN). Residue Asn-141 is glycosylated (N-linked (GlcNAc...) asparagine). A helical membrane pass occupies residues 160 to 177 (GFFDQFIGTASLIVCVLA). At 178–189 (IVDPNNNPVPRG) the chain is on the cytoplasmic side. Residues 190–206 (LEAFTVGLVVLVIGTSM) traverse the membrane as a helical segment. Topologically, residues 207 to 210 (GFNS) are extracellular. Residues 211–224 (GYAVNPARDFGPRL) constitute an intramembrane region (discontinuously helical). The NPA 2 signature appears at 215–217 (NPA). Over 225–242 (FTAIAGWGSEVFTTGRHW) the chain is Extracellular. Residues 243-264 (WWVPIASPLLGSIAGVFVYQLM) form a helical membrane-spanning segment. Residues 265-290 (IGCHLEPPPPSTDEENVKLSQVKHKE) are Cytoplasmic-facing.

The protein belongs to the MIP/aquaporin (TC 1.A.8) family. Homotetramer; each monomer provides an independent glycerol/water pore. Could also exist in other oligomeric states. As to expression, highly expressed in stomach and spleen, with lower expression in kidney and lung.

The protein resides in the cell membrane. It localises to the basolateral cell membrane. The enzyme catalyses glycerol(in) = glycerol(out). It carries out the reaction H2O(in) = H2O(out). The catalysed reaction is urea(in) = urea(out). It catalyses the reaction H2O2(out) = H2O2(in). Functionally, aquaglyceroporins form homotetrameric transmembrane channels, with each monomer independently mediating glycerol and water transport across the plasma membrane along their osmotic gradient. Could also be permeable to urea. Also participates in cell permeability to H2O2 and H2O2-mediated signaling. In skin, transports glycerol to the epidermis and stratum corneum, where it maintains hydration, elasticity, and supports lipid biosynthesis for barrier repair. In kidney, contributes to the reabsorption of water, helping the body maintain proper fluid balance. In Sus scrofa (Pig), this protein is Aquaporin-3.